A 130-amino-acid chain; its full sequence is Small ribosomal subunit protein uS9 (130 aa).

The protein belongs to the universal ribosomal protein uS9 family.

In Shigella dysenteriae serotype 1 (strain Sd197), this protein is Small ribosomal subunit protein uS9.